The following is a 282-amino-acid chain: Bifunctional protein FolD (282 aa).

NADP(+) contacts are provided by residues 165–167 and Ser190; that span reads GRS.

It belongs to the tetrahydrofolate dehydrogenase/cyclohydrolase family. In terms of assembly, homodimer.

The enzyme catalyses (6R)-5,10-methylene-5,6,7,8-tetrahydrofolate + NADP(+) = (6R)-5,10-methenyltetrahydrofolate + NADPH. It carries out the reaction (6R)-5,10-methenyltetrahydrofolate + H2O = (6R)-10-formyltetrahydrofolate + H(+). It participates in one-carbon metabolism; tetrahydrofolate interconversion. Catalyzes the oxidation of 5,10-methylenetetrahydrofolate to 5,10-methenyltetrahydrofolate and then the hydrolysis of 5,10-methenyltetrahydrofolate to 10-formyltetrahydrofolate. This Macrococcus caseolyticus (strain JCSC5402) (Macrococcoides caseolyticum) protein is Bifunctional protein FolD.